Reading from the N-terminus, the 521-residue chain is Phospholipase C B (521 aa).

A signal peptide (tat-type signal) is located at residues M1–A39. A disordered region spans residues F501–C521.

Belongs to the bacterial phospholipase C family. Predicted to be exported by the Tat system. The position of the signal peptide cleavage has not been experimentally proven.

It localises to the secreted. The protein localises to the cell wall. The catalysed reaction is a 1,2-diacyl-sn-glycero-3-phosphocholine + H2O = phosphocholine + a 1,2-diacyl-sn-glycerol + H(+). Its function is as follows. Involved in virulence. Induces cytotoxic effects on mouse macrophage cell lines, via direct or indirect enzymatic hydrolysis of cell membrane phospholipids. Hydrolyzes phosphatidylcholine. This chain is Phospholipase C B, found in Mycobacterium tuberculosis (strain CDC 1551 / Oshkosh).